The sequence spans 273 residues: Large ribosomal subunit protein uL2 (273 aa).

Disordered regions lie at residues 28-53 (KPFA…TTRH) and 221-273 (RGTA…RRSK). The span at 39–48 (KSGGRNNNGR) shows a compositional bias: low complexity.

It belongs to the universal ribosomal protein uL2 family. In terms of assembly, part of the 50S ribosomal subunit. Forms a bridge to the 30S subunit in the 70S ribosome.

One of the primary rRNA binding proteins. Required for association of the 30S and 50S subunits to form the 70S ribosome, for tRNA binding and peptide bond formation. It has been suggested to have peptidyltransferase activity; this is somewhat controversial. Makes several contacts with the 16S rRNA in the 70S ribosome. The chain is Large ribosomal subunit protein uL2 from Klebsiella pneumoniae (strain 342).